Consider the following 346-residue polypeptide: Phosphoribosylformylglycinamidine cyclo-ligase (346 aa).

This sequence belongs to the AIR synthase family.

Its subcellular location is the cytoplasm. It carries out the reaction 2-formamido-N(1)-(5-O-phospho-beta-D-ribosyl)acetamidine + ATP = 5-amino-1-(5-phospho-beta-D-ribosyl)imidazole + ADP + phosphate + H(+). Its pathway is purine metabolism; IMP biosynthesis via de novo pathway; 5-amino-1-(5-phospho-D-ribosyl)imidazole from N(2)-formyl-N(1)-(5-phospho-D-ribosyl)glycinamide: step 2/2. The chain is Phosphoribosylformylglycinamidine cyclo-ligase from Synechococcus sp. (strain CC9311).